We begin with the raw amino-acid sequence, 145 residues long: MRCLGIDYGTRRIGLAYGDELGVATPLPALVEADPAKRWQSLLATARQRRVTDLVVGHPLNMDDTAGPKAKEAEAVAARLRTELAGVDVHLVDERLTSYEAEATISKTQRRAVRASGVIDSRAATLILQDFLDQRFPPPLPHPAE.

This sequence belongs to the YqgF nuclease family.

It localises to the cytoplasm. In terms of biological role, could be a nuclease involved in processing of the 5'-end of pre-16S rRNA. In Opitutus terrae (strain DSM 11246 / JCM 15787 / PB90-1), this protein is Putative pre-16S rRNA nuclease.